We begin with the raw amino-acid sequence, 211 residues long: CASP-like protein 1B1 (211 aa).

The interval 1 to 29 (MDLERGSKTPPSSAPAAAAATTTTSTCCS) is disordered. Residues 1–55 (MDLERGSKTPPSSAPAAAAATTTTSTCCSNKRPQLRDRLVALQPVVLRAAATLAT) lie on the Cytoplasmic side of the membrane. Residues 9–26 (TPPSSAPAAAAATTTTST) show a composition bias toward low complexity. A helical transmembrane segment spans residues 56–76 (AVAAAVMALNAQSYTAVVAIV). Residues 77-94 (GTRPLTQTFTTKFRDTPA) are Extracellular-facing. The chain crosses the membrane as a helical span at residues 95–115 (FVYFVIANAIAAVYNLVMLLF). Residues 116–123 (RCLILRRR) are Cytoplasmic-facing. Residues 124–144 (MAGLVVHMLDMVIMALLATGA) form a helical membrane-spanning segment. The Extracellular portion of the chain corresponds to 145–176 (ATAAAMAELGKNGNVHARWNPICDRFGSFCSR). A helical transmembrane segment spans residues 177–197 (GGVALASSFTGVALMLALNLL). Residues 198 to 211 (SAASNAQCSPGQYE) are Cytoplasmic-facing.

The protein belongs to the Casparian strip membrane proteins (CASP) family. As to quaternary structure, homodimer and heterodimers.

Its subcellular location is the cell membrane. The chain is CASP-like protein 1B1 from Sorghum bicolor (Sorghum).